Here is a 241-residue protein sequence, read N- to C-terminus: Triosephosphate isomerase (241 aa).

Position 9–11 (N9–K11) interacts with substrate. Residue H96 is the Electrophile of the active site. E165 acts as the Proton acceptor in catalysis. Substrate-binding positions include G171, S204, and G225–G226.

The protein belongs to the triosephosphate isomerase family. Homodimer.

It is found in the cytoplasm. It carries out the reaction D-glyceraldehyde 3-phosphate = dihydroxyacetone phosphate. Its pathway is carbohydrate biosynthesis; gluconeogenesis. The protein operates within carbohydrate degradation; glycolysis; D-glyceraldehyde 3-phosphate from glycerone phosphate: step 1/1. In terms of biological role, involved in the gluconeogenesis. Catalyzes stereospecifically the conversion of dihydroxyacetone phosphate (DHAP) to D-glyceraldehyde-3-phosphate (G3P). This is Triosephosphate isomerase from Trichodesmium erythraeum (strain IMS101).